Reading from the N-terminus, the 169-residue chain is NADH-quinone oxidoreductase subunit I (169 aa).

2 consecutive 4Fe-4S ferredoxin-type domains span residues 60 to 90 (LRRYPNGEERCIACKLCEVICPAQAIVIEAE) and 100 to 129 (TRYDIDMIKCIYCGLCQEACPVDAIVEGPN). 8 residues coordinate [4Fe-4S] cluster: Cys70, Cys73, Cys76, Cys80, Cys109, Cys112, Cys115, and Cys119.

The protein belongs to the complex I 23 kDa subunit family. In terms of assembly, NDH-1 is composed of 14 different subunits. Subunits NuoA, H, J, K, L, M, N constitute the membrane sector of the complex. Requires [4Fe-4S] cluster as cofactor.

It localises to the cell membrane. The enzyme catalyses a quinone + NADH + 5 H(+)(in) = a quinol + NAD(+) + 4 H(+)(out). In terms of biological role, NDH-1 shuttles electrons from NADH, via FMN and iron-sulfur (Fe-S) centers, to quinones in the respiratory chain. The immediate electron acceptor for the enzyme in this species is believed to be ubiquinone. Couples the redox reaction to proton translocation (for every two electrons transferred, four hydrogen ions are translocated across the cytoplasmic membrane), and thus conserves the redox energy in a proton gradient. The polypeptide is NADH-quinone oxidoreductase subunit I (Wolbachia pipientis wMel).